The primary structure comprises 584 residues: Aspartate--tRNA ligase (584 aa).

Residue glutamate 169 participates in L-aspartate binding. The interval 193-196 (QLFK) is aspartate. L-aspartate is bound at residue arginine 215. Residues 215 to 217 (RDE) and glutamine 224 contribute to the ATP site. L-aspartate is bound at residue histidine 446. Glutamate 480 contacts ATP. Arginine 487 provides a ligand contact to L-aspartate. ATP is bound at residue 532-535 (GLDR).

Belongs to the class-II aminoacyl-tRNA synthetase family. Type 1 subfamily. Homodimer.

The protein resides in the cytoplasm. It carries out the reaction tRNA(Asp) + L-aspartate + ATP = L-aspartyl-tRNA(Asp) + AMP + diphosphate. Catalyzes the attachment of L-aspartate to tRNA(Asp) in a two-step reaction: L-aspartate is first activated by ATP to form Asp-AMP and then transferred to the acceptor end of tRNA(Asp). The sequence is that of Aspartate--tRNA ligase from Buchnera aphidicola subsp. Schizaphis graminum (strain Sg).